Reading from the N-terminus, the 399-residue chain is S-adenosylmethionine synthase (399 aa).

Residue His-15 participates in ATP binding. Asp-17 provides a ligand contact to Mg(2+). Glu-43 serves as a coordination point for K(+). L-methionine-binding residues include Glu-56 and Gln-99. The flexible loop stretch occupies residues 99 to 109 (QSPDIADGVDH). ATP is bound by residues 175–177 (DAK), 242–243 (RF), Asp-251, 257–258 (RK), Ala-274, and Lys-278. Residue Asp-251 participates in L-methionine binding. Position 282 (Lys-282) interacts with L-methionine.

This sequence belongs to the AdoMet synthase family. As to quaternary structure, homotetramer; dimer of dimers. Mg(2+) is required as a cofactor. It depends on K(+) as a cofactor.

The protein resides in the cytoplasm. The catalysed reaction is L-methionine + ATP + H2O = S-adenosyl-L-methionine + phosphate + diphosphate. Its pathway is amino-acid biosynthesis; S-adenosyl-L-methionine biosynthesis; S-adenosyl-L-methionine from L-methionine: step 1/1. Functionally, catalyzes the formation of S-adenosylmethionine (AdoMet) from methionine and ATP. The overall synthetic reaction is composed of two sequential steps, AdoMet formation and the subsequent tripolyphosphate hydrolysis which occurs prior to release of AdoMet from the enzyme. This Lactobacillus acidophilus (strain ATCC 700396 / NCK56 / N2 / NCFM) protein is S-adenosylmethionine synthase.